A 199-amino-acid chain; its full sequence is Holliday junction resolvase RecU (199 aa).

Mg(2+)-binding residues include T82, D84, E97, and Q116.

The protein belongs to the RecU family. Requires Mg(2+) as cofactor.

It localises to the cytoplasm. It catalyses the reaction Endonucleolytic cleavage at a junction such as a reciprocal single-stranded crossover between two homologous DNA duplexes (Holliday junction).. Functionally, endonuclease that resolves Holliday junction intermediates in genetic recombination. Cleaves mobile four-strand junctions by introducing symmetrical nicks in paired strands. Promotes annealing of linear ssDNA with homologous dsDNA. Required for DNA repair, homologous recombination and chromosome segregation. This is Holliday junction resolvase RecU from Streptococcus pyogenes serotype M1.